A 591-amino-acid chain; its full sequence is uncharacterized protein (591 aa).

Helical transmembrane passes span 389-409 (VYLG…SALI), 411-431 (GGSP…GGIL), 538-558 (GILP…FALS), and 571-591 (PIIS…FNLL).

The protein localises to the membrane. This is an uncharacterized protein from Mycoplasma (Bacteriophage L2).